The primary structure comprises 176 residues: Putative L,D-transpeptidase YqjB (176 aa).

The signal sequence occupies residues 1–25 (MRFFLCSIFMMISPIWPLGENPLPG). Residues 27-151 (PYVIVNKRTN…IPVGTRVLIT (125 aa)) enclose the L,D-TPase catalytic domain. The Proton donor/acceptor role is filled by His-111. Residue Cys-127 is the Nucleophile of the active site.

Belongs to the YkuD family.

The protein operates within cell wall biogenesis; peptidoglycan biosynthesis. The protein is Putative L,D-transpeptidase YqjB (yqjB) of Bacillus subtilis (strain 168).